The sequence spans 284 residues: Avenin-like b10 (284 aa).

Positions Met1–Ala18 are cleaved as a signal peptide.

This sequence belongs to the prolamin family. In terms of processing, contains disulfide bonds.

In terms of biological role, seed storage protein. Might be integrated via inter-chain disulfide bonds within the glutenin polymer. The chain is Avenin-like b10 from Triticum aestivum (Wheat).